Consider the following 523-residue polypeptide: Lysine--tRNA ligase (523 aa).

The short motif at 30 to 38 (PSGYVHVGN) is the 'HIGH' region element. Zn(2+) contacts are provided by Asp95, Cys99, His100, His106, Cys177, His180, Cys199, and His203. The 'KMSKS' region signature appears at 279 to 283 (KMSGS).

The protein belongs to the class-I aminoacyl-tRNA synthetase family. It depends on Zn(2+) as a cofactor.

The protein resides in the cytoplasm. It catalyses the reaction tRNA(Lys) + L-lysine + ATP = L-lysyl-tRNA(Lys) + AMP + diphosphate. In Pyrococcus horikoshii (strain ATCC 700860 / DSM 12428 / JCM 9974 / NBRC 100139 / OT-3), this protein is Lysine--tRNA ligase (lysS).